The chain runs to 331 residues: 6-phosphogluconolactonase (331 aa).

Lysine 287 carries the N6-acetyllysine modification.

The protein belongs to the cycloisomerase 2 family.

It catalyses the reaction 6-phospho-D-glucono-1,5-lactone + H2O = 6-phospho-D-gluconate + H(+). Its pathway is carbohydrate degradation; pentose phosphate pathway; D-ribulose 5-phosphate from D-glucose 6-phosphate (oxidative stage): step 2/3. Catalyzes the hydrolysis of 6-phosphogluconolactone to 6-phosphogluconate. In Escherichia coli O7:K1 (strain IAI39 / ExPEC), this protein is 6-phosphogluconolactonase.